The chain runs to 132 residues: Agouti-signaling protein (132 aa).

Residues 1–22 (MDVTRLLLATLLVFLCFFTAYS) form the signal peptide. A glycan (N-linked (GlcNAc...) asparagine) is linked at Asn-39. The disordered stretch occupies residues 61-87 (QISRKEAEKKRSSKKEASMKKVARPRT). Residues 63–79 (SRKEAEKKRSSKKEASM) show a composition bias toward basic and acidic residues. 5 disulfide bridges follow: Cys-93–Cys-108, Cys-100–Cys-114, Cys-107–Cys-125, Cys-111–Cys-132, and Cys-116–Cys-123. One can recognise an Agouti domain in the interval 93 to 132 (CVATRDSCKSPAPACCDPCASCQCRFFRSACSCRVLSLNC).

The protein resides in the secreted. Its function is as follows. Involved in the regulation of melanogenesis. The binding of ASP to MC1R precludes alpha-MSH initiated signaling and thus blocks production of cAMP, leading to a down-regulation of eumelanogenesis (brown/black pigment) and thus increasing synthesis of pheomelanin (yellow/red pigment). This chain is Agouti-signaling protein (ASIP), found in Macaca nigra (Celebes black macaque).